The sequence spans 517 residues: Perilipin-1 (517 aa).

Ser-81 carries the phosphoserine modification. Thr-85 carries the phosphothreonine modification. Residues Ser-126, Ser-130, Ser-132, Ser-137, and Ser-174 each carry the phosphoserine modification. The segment at 197 to 217 (VESAPSSGRQKTQKAPKAKPS) is disordered. 3 positions are modified to phosphothreonine: Thr-224, Thr-299, and Thr-301. Positions 285 to 321 (HNLAASKDENHEDQTDTEGEETDEEEEEEESEAEENV) are disordered. The interval 291–322 (KDENHEDQTDTEGEETDEEEEEEESEAEENVL) is required for interaction with CIDEC. Positions 299–319 (TDTEGEETDEEEEEEESEAEE) are enriched in acidic residues. A phosphoserine mark is found at Ser-315, Ser-385, Ser-387, Pro-408, Ser-411, Ser-434, Ser-436, Ser-440, Ser-460, Ser-492, and Ser-494. The interval 415 to 495 (PESEFQDIDN…KPARRVSDSF (81 aa)) is disordered. The span at 483-492 (PREKPARRVS) shows a compositional bias: basic and acidic residues.

This sequence belongs to the perilipin family. As to quaternary structure, interacts with ABHD5. Interacts with CIDEC. Interacts with AQP7. Major cAMP-dependent protein kinase substrate in adipocytes, also dephosphorylated by PP1. When phosphorylated, may be maximally sensitive to HSL. When unphosphorylated, may play a role in the inhibition of lipolysis, by acting as a barrier in lipid droplet. In terms of processing, the N-terminus is blocked. As to expression, adipocytes.

Its subcellular location is the endoplasmic reticulum. The protein localises to the lipid droplet. Functionally, modulator of adipocyte lipid metabolism. Coats lipid storage droplets to protect them from breakdown by hormone-sensitive lipase (HSL). Its absence may result in leanness. Plays a role in unilocular lipid droplet formation by activating CIDEC. Their interaction promotes lipid droplet enlargement and directional net neutral lipid transfer. May modulate lipolysis and triglyceride levels. The sequence is that of Perilipin-1 (Plin1) from Rattus norvegicus (Rat).